The following is a 311-amino-acid chain: GPN-loop GTPase 2 (311 aa).

Residue 20 to 25 participates in GTP binding; the sequence is GSGKTT. Residues 77-79 carry the Gly-Pro-Asn (GPN)-loop; involved in dimer interface motif; that stretch reads GPN. 179 to 182 contributes to the GTP binding site; that stretch reads SKMD.

Belongs to the GPN-loop GTPase family. As to quaternary structure, heterodimers with gpn1 or gpn3. Binds to RNA polymerase II (RNAPII).

Small GTPase required for proper localization of RNA polymerase II and III (RNAPII and RNAPIII). May act at an RNAP assembly step prior to nuclear import. This Danio rerio (Zebrafish) protein is GPN-loop GTPase 2.